A 320-amino-acid chain; its full sequence is ATP-dependent 6-phosphofructokinase (320 aa).

G12 contacts ATP. Residues 22-26 (RGVVR) and 55-60 (RYSVSD) each bind ADP. Residues 73-74 (RF) and 103-106 (GDGS) each bind ATP. D104 contacts Mg(2+). Residue 126–128 (TID) coordinates substrate. D128 serves as the catalytic Proton acceptor. R155 is a binding site for ADP. Substrate contacts are provided by residues R163 and 170-172 (MGR). ADP-binding positions include 186–188 (GCE), K212, and 214–216 (KKH). Substrate-binding positions include E223, R244, and 250–253 (HIQR).

This sequence belongs to the phosphofructokinase type A (PFKA) family. ATP-dependent PFK group I subfamily. Prokaryotic clade 'B1' sub-subfamily. Homotetramer. Requires Mg(2+) as cofactor.

The protein resides in the cytoplasm. The enzyme catalyses beta-D-fructose 6-phosphate + ATP = beta-D-fructose 1,6-bisphosphate + ADP + H(+). It participates in carbohydrate degradation; glycolysis; D-glyceraldehyde 3-phosphate and glycerone phosphate from D-glucose: step 3/4. Its activity is regulated as follows. Allosterically activated by ADP and other diphosphonucleosides, and allosterically inhibited by phosphoenolpyruvate. In terms of biological role, catalyzes the phosphorylation of D-fructose 6-phosphate to fructose 1,6-bisphosphate by ATP, the first committing step of glycolysis. The chain is ATP-dependent 6-phosphofructokinase from Serratia proteamaculans (strain 568).